A 591-amino-acid polypeptide reads, in one-letter code: V-type ATP synthase alpha chain (591 aa).

242 to 249 (GPFGAGKT) provides a ligand contact to ATP.

This sequence belongs to the ATPase alpha/beta chains family.

The catalysed reaction is ATP + H2O + 4 H(+)(in) = ADP + phosphate + 5 H(+)(out). Functionally, produces ATP from ADP in the presence of a proton gradient across the membrane. The V-type alpha chain is a catalytic subunit. The sequence is that of V-type ATP synthase alpha chain from Chlamydia trachomatis serovar L2 (strain ATCC VR-902B / DSM 19102 / 434/Bu).